The primary structure comprises 317 residues: Transaldolase 1 (317 aa).

Lysine 132 (schiff-base intermediate with substrate) is an active-site residue.

It belongs to the transaldolase family. Type 1 subfamily. Homodimer.

It is found in the cytoplasm. It catalyses the reaction D-sedoheptulose 7-phosphate + D-glyceraldehyde 3-phosphate = D-erythrose 4-phosphate + beta-D-fructose 6-phosphate. Its pathway is carbohydrate degradation; pentose phosphate pathway; D-glyceraldehyde 3-phosphate and beta-D-fructose 6-phosphate from D-ribose 5-phosphate and D-xylulose 5-phosphate (non-oxidative stage): step 2/3. Functionally, transaldolase is important for the balance of metabolites in the pentose-phosphate pathway. This is Transaldolase 1 from Salmonella paratyphi A (strain ATCC 9150 / SARB42).